A 90-amino-acid polypeptide reads, in one-letter code: Probable Fe(2+)-trafficking protein (90 aa).

It belongs to the Fe(2+)-trafficking protein family. As to quaternary structure, monomer.

Could be a mediator in iron transactions between iron acquisition and iron-requiring processes, such as synthesis and/or repair of Fe-S clusters in biosynthetic enzymes. In Pectobacterium atrosepticum (strain SCRI 1043 / ATCC BAA-672) (Erwinia carotovora subsp. atroseptica), this protein is Probable Fe(2+)-trafficking protein.